A 338-amino-acid chain; its full sequence is Phytanoyl-CoA dioxygenase, peroxisomal (338 aa).

The N-terminal 30 residues, 1-30, are a transit peptide targeting the peroxisome; sequence MDYTRAGARLQVLLGHLGRPSALQIVAHPV. 2 positions are modified to N6-succinyllysine: Lys59 and Lys108. 2-oxoglutarate is bound by residues Lys120, Met157, 175–177, and Trp193; that span reads HQD. Fe cation is bound by residues His175 and Asp177. Lys231 and Lys252 each carry N6-succinyllysine. His264 contributes to the Fe cation binding site. Positions 266 and 275 each coordinate 2-oxoglutarate.

Belongs to the PhyH family. Interacts specifically with FKBP52 and PHYHIP. Requires Fe cation as cofactor. L-ascorbate is required as a cofactor. It depends on ATP as a cofactor. Mg(2+) serves as cofactor.

It is found in the peroxisome. The enzyme catalyses phytanoyl-CoA + 2-oxoglutarate + O2 = 2-hydroxyphytanoyl-CoA + succinate + CO2. It carries out the reaction 3-methylhexadecanoyl-CoA + 2-oxoglutarate + O2 = 2-hydroxy-3-methylhexadecanoyl-CoA + succinate + CO2. It catalyses the reaction hexadecanoyl-CoA + 2-oxoglutarate + O2 = 2-hydroxyhexadecanoyl-CoA + succinate + CO2. The catalysed reaction is octanoyl-CoA + 2-oxoglutarate + O2 = 2-hydroxyoctanoyl-CoA + succinate + CO2. The enzyme catalyses decanoyl-CoA + 2-oxoglutarate + O2 = 2-hydroxydecanoyl-CoA + succinate + CO2. It carries out the reaction 3-methylbutanoyl-CoA + 2-oxoglutarate + O2 = 2-hydroxy-3-methylbutanoyl-CoA + succinate + CO2. It catalyses the reaction heptadecanoyl-CoA + 2-oxoglutarate + O2 = 2-hydroxyheptadecanoyl-CoA + succinate + CO2. The catalysed reaction is eicosanoyl-CoA + 2-oxoglutarate + O2 = 2-hydroxyeicosanoyl-CoA + succinate + CO2. The enzyme catalyses octadecanoyl-CoA + 2-oxoglutarate + O2 = 2-hydroxyoctadecanoyl-CoA + succinate + CO2. It carries out the reaction dodecanoyl-CoA + 2-oxoglutarate + O2 = 2-hydroxydodecanoyl-CoA + succinate + CO2. It catalyses the reaction tetradecanoyl-CoA + 2-oxoglutarate + O2 = 2-hydroxytetradecanoyl-CoA + succinate + CO2. The catalysed reaction is hexanoyl-CoA + 2-oxoglutarate + O2 = 2-hydroxyhexanoyl-CoA + succinate + CO2. The enzyme catalyses butanoyl-CoA + 2-oxoglutarate + O2 = 2-hydroxybutanoyl-CoA + succinate + CO2. It carries out the reaction 3-methylnonanoyl-CoA + 2-oxoglutarate + O2 = 2-hydroxy-3-methylnonanoyl-CoA + succinate + CO2. It catalyses the reaction 3-methylundecanoyl-CoA + 2-oxoglutarate + O2 = 2-hydroxy-3-methylundecanoyl-CoA + succinate + CO2. The catalysed reaction is 3-methyldodecanoyl-CoA + 2-oxoglutarate + O2 = 2-hydroxy-3-methyldodecanoyl-CoA + succinate + CO2. The protein operates within lipid metabolism; fatty acid metabolism. Catalyzes the 2-hydroxylation of racemic phytanoyl-CoA and the isomers of 3-methylhexadecanoyl-CoA. Shows activity also towards a variety of other mono-branched 3-methylacyl-CoA esters (with a chain length of at least seven carbon atoms) and straight-chain acyl-CoA esters (with a chain length longer than four carbon atoms). Does not hydroxylate long and very long straight chain acyl-CoAs or 2-methyl-and 4-methyl-branched acyl-CoAs. The chain is Phytanoyl-CoA dioxygenase, peroxisomal (Phyh) from Rattus norvegicus (Rat).